We begin with the raw amino-acid sequence, 146 residues long: VHLTGEEKAAVTALWGKVNVDEVGGEALGRLLVVYPWTQRFFDSFGDLSSPDAVMGNPKVKAHGKKVLNSFSEGLKNLDNLKGTFAKLSELHCDKLHVDPENFKLLGNVLVCVLAHHFGKEFTPQVQAAYQKVVAGVANALAHKYH.

V1 is modified (N-acetylvaline). Residues 2 to 146 enclose the Globin domain; that stretch reads HLTGEEKAAV…VANALAHKYH (145 aa). T12 is subject to Phosphothreonine. The residue at position 44 (S44) is a Phosphoserine. Position 59 is an N6-acetyllysine (K59). H63 contacts heme b. N6-acetyllysine is present on K82. Heme b is bound at residue H92. C93 is subject to S-nitrosocysteine. K144 carries the post-translational modification N6-acetyllysine.

It belongs to the globin family. In terms of assembly, heterotetramer of two alpha chains and two beta chains. Red blood cells.

In terms of biological role, involved in oxygen transport from the lung to the various peripheral tissues. The chain is Hemoglobin subunit beta (HBB) from Martes foina (Beech marten).